A 1700-amino-acid chain; its full sequence is Leucine-rich repeat-containing protein 37A2 (1700 aa).

An N-terminal signal peptide occupies residues 1-35 (MSSAQCPALVCVMSRLRFWGPWPLLMWQLLWLLVK). Residues 36 to 1582 (EAQPLEWVKD…VPGYGYTDKL (1547 aa)) lie on the Extracellular side of the membrane. Positions 54-65 (LGPPDSWSSHSS) are enriched in polar residues. Disordered stretches follow at residues 54-104 (LGPP…ESTE), 130-156 (QQDL…DPAQ), 169-534 (QLST…AQPP), 559-580 (TEVE…KVVP), 619-642 (PEPT…KHPE), and 729-752 (TKPT…PDLG). Residues 137–160 (LSPQERLPVSPKKLKKDPAQRWSL) form an LRR 1 repeat. Composition is skewed to polar residues over residues 169–189 (QLST…STDT) and 223–237 (ETQN…QSSS). LRR repeat units follow at residues 230–253 (LEDI…LEEE) and 267–290 (ESSM…EDQA). A compositionally biased stretch (low complexity) spans 238–249 (LQQEAPAQLPQL). The N-linked (GlcNAc...) asparagine glycan is linked to Asn296. The span at 307–326 (TITSEPTNETESSQAQQETP) shows a compositional bias: polar residues. Positions 358-368 (SEQQQPVQPSE) are enriched in low complexity. The span at 433 to 446 (LVHQEATTRLSGSG) shows a compositional bias: polar residues. Positions 482-493 (SPEPINNENPSP) are enriched in low complexity. Low complexity predominate over residues 729 to 749 (TKPTTEVKPSPTTEETSTQPP). LRR repeat units lie at residues 864–887 (NGTF…VWKA), 888–911 (YSWT…SFEG), 912–935 (LLSL…TFEP), 937–959 (PFLK…TFQA), 963–987 (MQFL…LFKL), and 1002–1027 (LTTL…MACC). Asn1079 is a glycosylation site (N-linked (GlcNAc...) asparagine). An LRR 10 repeat occupies 1124–1146 (LPYFSAVNLDVKSLLLPFIKLPT). 2 stretches are compositionally biased toward basic and acidic residues: residues 1182–1191 (VGRQSIRREQ) and 1201–1216 (AEEK…EVEQ). 2 disordered regions span residues 1182–1227 (VGRQ…EKLA) and 1309–1328 (KTRS…PKVR). A helical transmembrane segment spans residues 1583–1603 (ILALIVTGILTILIILFCLIV). At 1604–1700 (ICCHRRSLQE…TEEEESEALP (97 aa)) the chain is on the cytoplasmic side. Residues 1675–1685 (NEDKILNRDPG) are compositionally biased toward basic and acidic residues. Positions 1675–1700 (NEDKILNRDPGDSEAPTEEEESEALP) are disordered. Acidic residues predominate over residues 1689–1700 (APTEEEESEALP).

The protein belongs to the LRRC37A family.

Its subcellular location is the membrane. This chain is Leucine-rich repeat-containing protein 37A2 (LRRC37A2), found in Homo sapiens (Human).